Reading from the N-terminus, the 378-residue chain is Succinyl-diaminopimelate desuccinylase (378 aa).

His67 is a Zn(2+) binding site. Asp69 is an active-site residue. Position 100 (Asp100) interacts with Zn(2+). Glu134 functions as the Proton acceptor in the catalytic mechanism. Zn(2+) contacts are provided by Glu135, Glu163, and His349.

This sequence belongs to the peptidase M20A family. DapE subfamily. Homodimer. Zn(2+) serves as cofactor. Requires Co(2+) as cofactor.

It catalyses the reaction N-succinyl-(2S,6S)-2,6-diaminopimelate + H2O = (2S,6S)-2,6-diaminopimelate + succinate. It participates in amino-acid biosynthesis; L-lysine biosynthesis via DAP pathway; LL-2,6-diaminopimelate from (S)-tetrahydrodipicolinate (succinylase route): step 3/3. Catalyzes the hydrolysis of N-succinyl-L,L-diaminopimelic acid (SDAP), forming succinate and LL-2,6-diaminopimelate (DAP), an intermediate involved in the bacterial biosynthesis of lysine and meso-diaminopimelic acid, an essential component of bacterial cell walls. This Pasteurella multocida (strain Pm70) protein is Succinyl-diaminopimelate desuccinylase.